A 161-amino-acid polypeptide reads, in one-letter code: UPF0303 protein Spro_1996 (161 aa).

Belongs to the UPF0303 family.

This chain is UPF0303 protein Spro_1996, found in Serratia proteamaculans (strain 568).